The chain runs to 352 residues: Probable dual-specificity RNA methyltransferase RlmN (352 aa).

E92 acts as the Proton acceptor in catalysis. The Radical SAM core domain maps to 98-328 (YKHGFTACIS…ATIRREMGTD (231 aa)). Residues C105 and C333 are joined by a disulfide bond. [4Fe-4S] cluster is bound by residues C112, C116, and C119. Residues 159 to 160 (GE), S191, 214 to 216 (SLH), and N290 each bind S-adenosyl-L-methionine. C333 serves as the catalytic S-methylcysteine intermediate.

It belongs to the radical SAM superfamily. RlmN family. [4Fe-4S] cluster is required as a cofactor.

It localises to the cytoplasm. It carries out the reaction adenosine(2503) in 23S rRNA + 2 reduced [2Fe-2S]-[ferredoxin] + 2 S-adenosyl-L-methionine = 2-methyladenosine(2503) in 23S rRNA + 5'-deoxyadenosine + L-methionine + 2 oxidized [2Fe-2S]-[ferredoxin] + S-adenosyl-L-homocysteine. It catalyses the reaction adenosine(37) in tRNA + 2 reduced [2Fe-2S]-[ferredoxin] + 2 S-adenosyl-L-methionine = 2-methyladenosine(37) in tRNA + 5'-deoxyadenosine + L-methionine + 2 oxidized [2Fe-2S]-[ferredoxin] + S-adenosyl-L-homocysteine. In terms of biological role, specifically methylates position 2 of adenine 2503 in 23S rRNA and position 2 of adenine 37 in tRNAs. This chain is Probable dual-specificity RNA methyltransferase RlmN, found in Alkaliphilus metalliredigens (strain QYMF).